The chain runs to 317 residues: 2,3-dihydroxyphenylpropionate/2,3-dihydroxicinnamic acid 1,2-dioxygenase 2 (317 aa).

Histidine 115 serves as the catalytic Proton donor. Histidine 179 acts as the Proton acceptor in catalysis.

This sequence belongs to the LigB/MhpB extradiol dioxygenase family. As to quaternary structure, homotetramer. Fe(2+) is required as a cofactor.

It carries out the reaction 3-(2,3-dihydroxyphenyl)propanoate + O2 = (2Z,4E)-2-hydroxy-6-oxonona-2,4-dienedioate + H(+). The catalysed reaction is (2E)-3-(2,3-dihydroxyphenyl)prop-2-enoate + O2 = (2Z,4E,7E)-2-hydroxy-6-oxonona-2,4,7-trienedioate + H(+). The protein operates within aromatic compound metabolism; 3-phenylpropanoate degradation. Catalyzes the non-heme iron(II)-dependent oxidative cleavage of 2,3-dihydroxyphenylpropionic acid and 2,3-dihydroxicinnamic acid into 2-hydroxy-6-ketononadienedioate and 2-hydroxy-6-ketononatrienedioate, respectively. The sequence is that of 2,3-dihydroxyphenylpropionate/2,3-dihydroxicinnamic acid 1,2-dioxygenase 2 from Dechloromonas aromatica (strain RCB).